The primary structure comprises 123 residues: Small ribosomal subunit protein uS12 (123 aa).

3-methylthioaspartic acid is present on aspartate 89.

The protein belongs to the universal ribosomal protein uS12 family. In terms of assembly, part of the 30S ribosomal subunit. Contacts proteins S8 and S17. May interact with IF1 in the 30S initiation complex.

In terms of biological role, with S4 and S5 plays an important role in translational accuracy. Functionally, interacts with and stabilizes bases of the 16S rRNA that are involved in tRNA selection in the A site and with the mRNA backbone. Located at the interface of the 30S and 50S subunits, it traverses the body of the 30S subunit contacting proteins on the other side and probably holding the rRNA structure together. The combined cluster of proteins S8, S12 and S17 appears to hold together the shoulder and platform of the 30S subunit. The polypeptide is Small ribosomal subunit protein uS12 (Acidiphilium cryptum (strain JF-5)).